A 435-amino-acid chain; its full sequence is ATP-dependent protease ATPase subunit HslU (435 aa).

ATP is bound by residues I18, 60–65 (GVGKTE), D248, E313, and R385.

It belongs to the ClpX chaperone family. HslU subfamily. A double ring-shaped homohexamer of HslV is capped on each side by a ring-shaped HslU homohexamer. The assembly of the HslU/HslV complex is dependent on binding of ATP.

It is found in the cytoplasm. ATPase subunit of a proteasome-like degradation complex; this subunit has chaperone activity. The binding of ATP and its subsequent hydrolysis by HslU are essential for unfolding of protein substrates subsequently hydrolyzed by HslV. HslU recognizes the N-terminal part of its protein substrates and unfolds these before they are guided to HslV for hydrolysis. The protein is ATP-dependent protease ATPase subunit HslU of Allorhizobium ampelinum (strain ATCC BAA-846 / DSM 112012 / S4) (Agrobacterium vitis (strain S4)).